Consider the following 874-residue polypeptide: Alanine--tRNA ligase (874 aa).

4 residues coordinate Zn(2+): histidine 562, histidine 566, cysteine 664, and histidine 668.

Belongs to the class-II aminoacyl-tRNA synthetase family. Requires Zn(2+) as cofactor.

It is found in the cytoplasm. The catalysed reaction is tRNA(Ala) + L-alanine + ATP = L-alanyl-tRNA(Ala) + AMP + diphosphate. Functionally, catalyzes the attachment of alanine to tRNA(Ala) in a two-step reaction: alanine is first activated by ATP to form Ala-AMP and then transferred to the acceptor end of tRNA(Ala). Also edits incorrectly charged Ser-tRNA(Ala) and Gly-tRNA(Ala) via its editing domain. The sequence is that of Alanine--tRNA ligase from Shewanella woodyi (strain ATCC 51908 / MS32).